A 399-amino-acid chain; its full sequence is STOREKEEPER protein (399 aa).

Disordered stretches follow at residues 1–160 and 250–301; these read MAPK…RSLW and GISN…EEQQ. Positions 20–54 are enriched in acidic residues; the sequence is EEQELVEESQEEEEQQSREEEGEEESGEETEEDEE. A compositionally biased stretch (polar residues) spans 69–79; the sequence is KLVQTPQKPQF. Composition is skewed to low complexity over residues 80-100 and 116-125; these read SSES…SGNS and AAKAATPSKP. 2 stretches are compositionally biased toward basic and acidic residues: residues 143 to 152 and 270 to 299; these read KIAEEEEKKS and KTVE…KEEE.

This sequence belongs to the GeBP family. In terms of tissue distribution, expressed in tubers and in leaves treated with sucrose.

The protein localises to the nucleus. Its function is as follows. May act as a transcriptional regulator. Binds specifically to the B-box motif, a promoter element that is required for the tuber-specific and sucrose inducible expression of the patatin gene. The sequence is that of STOREKEEPER protein from Solanum tuberosum (Potato).